The following is a 375-amino-acid chain: Delta(12) fatty acid dehydrogenase (375 aa).

Helical transmembrane passes span 54–74 (IIAY…PAPL) and 77–97 (LAWP…WVIG). The short motif at 98–102 (HECGH) is the Histidine box-1 element. Residues 110-130 (WVDDTVGFILHSFLMTPYFSW) form a helical membrane-spanning segment. Residues 134–138 (HRNHH) carry the Histidine box-2 motif. The next 3 membrane-spanning stretches (helical) occupy residues 172 to 192 (LLIM…TNIS), 218 to 238 (VLLS…AVAA), and 242 to 262 (AWVT…FDII). The Histidine box-3 motif lies at 308-312 (HVMHH).

The protein belongs to the fatty acid desaturase type 1 family. Fe cation serves as cofactor. As to expression, seed.

It is found in the membrane. The enzyme catalyses a (9Z,12Z)-octadecadienoyl-containing glycerolipid + 2 Fe(II)-[cytochrome b5] + O2 + 2 H(+) = a (9Z)-octadec-9-en-12-ynoyl-containing glycerolipid + 2 Fe(III)-[cytochrome b5] + 2 H2O. It functions in the pathway lipid metabolism; polyunsaturated fatty acid biosynthesis. Functionally, changes the delta-12 double bond of linoleic acid into a triple bond in the biosynthesis of crepenynic acid. This chain is Delta(12) fatty acid dehydrogenase, found in Crepis alpina (Hawksbeard).